Reading from the N-terminus, the 255-residue chain is Geranylgeranylglyceryl phosphate synthase (255 aa).

Aspartate 34 and threonine 64 together coordinate Mg(2+). Sn-glycerol 1-phosphate is bound by residues 182–188, 213–214, and 235–236; these read YLEAGSG, GG, and GN.

Belongs to the GGGP/HepGP synthase family. Group II subfamily. Requires Mg(2+) as cofactor.

Its subcellular location is the cytoplasm. The enzyme catalyses sn-glycerol 1-phosphate + (2E,6E,10E)-geranylgeranyl diphosphate = sn-3-O-(geranylgeranyl)glycerol 1-phosphate + diphosphate. It functions in the pathway membrane lipid metabolism; glycerophospholipid metabolism. Its function is as follows. Prenyltransferase that catalyzes the transfer of the geranylgeranyl moiety of geranylgeranyl diphosphate (GGPP) to the C3 hydroxyl of sn-glycerol-1-phosphate (G1P). This reaction is the first ether-bond-formation step in the biosynthesis of archaeal membrane lipids. This chain is Geranylgeranylglyceryl phosphate synthase, found in Saccharolobus solfataricus (strain ATCC 35092 / DSM 1617 / JCM 11322 / P2) (Sulfolobus solfataricus).